The primary structure comprises 245 residues: Retrovirus-related Pol polyprotein from type-1 retrotransposable element R1 (245 aa).

Residues 1 to 105 (LKDGTGIVAA…VDLETYCNKA (105 aa)) enclose the Reverse transcriptase domain. Positions 106 to 245 (EVRQKFREKE…IVRDDSNLEQ (140 aa)) are nucleic acid-binding endonuclease.

The catalysed reaction is DNA(n) + a 2'-deoxyribonucleoside 5'-triphosphate = DNA(n+1) + diphosphate. This Popillia japonica (Japanese beetle) protein is Retrovirus-related Pol polyprotein from type-1 retrotransposable element R1.